A 416-amino-acid polypeptide reads, in one-letter code: Gap junction alpha-3 protein (416 aa).

Residues 2-15 lie within the membrane without spanning it; it reads GDWSFLGRLLENAQ. Over 16–19 the chain is Cytoplasmic; the sequence is EHST. A helical membrane pass occupies residues 20–40; the sequence is VIGKVWLTVLFIFRILVLGAA. Over 41–71 the chain is Extracellular; that stretch reads AEEVWGDEQSDFTCNTQQPGCENVCYDRAFP. 3 disulfide bridges follow: Cys-54/Cys-198, Cys-61/Cys-192, and Cys-65/Cys-187. Residues 72–92 form a helical membrane-spanning segment; sequence ISHIRFWALQIIFVSTPTLIY. Residues 93–158 are Cytoplasmic-facing; the sequence is LGHVLHIVRM…GALLRTYVFN (66 aa). Positions 110–128 are enriched in basic and acidic residues; that stretch reads EEELLRRDNPQHGRGREPM. A disordered region spans residues 110 to 141; it reads EEELLRRDNPQHGRGREPMRTGSPRDPPLRDD. The chain crosses the membrane as a helical span at residues 159–179; sequence IIFKTLFEVGFIAGQYFLYGF. Topologically, residues 180–207 are extracellular; that stretch reads QLQPLYRCDRWPCPNTVDCFISRPTEKT. A helical membrane pass occupies residues 208 to 228; that stretch reads IFVIFMLAVACASLVLNMLEI. Residues 229–416 are Cytoplasmic-facing; that stretch reads YHLGWKKLKQ…GRARPGDLAI (188 aa). Residues 336–416 are disordered; the sequence is GAEPQTPASK…GRARPGDLAI (81 aa). Positions 342–353 are enriched in low complexity; the sequence is PASKPSSAASSP.

Belongs to the connexin family. Alpha-type (group II) subfamily. As to quaternary structure, a hemichannel or connexon is composed of a hexamer of connexins. A functional gap junction is formed by the apposition of two hemichannels. Forms heteromeric channels with GJA8. Detected in eye lens (at protein level). Most abundant in lens, but also present in heart and kidney.

Its subcellular location is the cell membrane. The protein resides in the cell junction. The protein localises to the gap junction. Structural component of lens fiber gap junctions. Gap junctions are dodecameric channels that connect the cytoplasm of adjoining cells. They are formed by the docking of two hexameric hemichannels, one from each cell membrane. Small molecules and ions diffuse from one cell to a neighboring cell via the central pore. The protein is Gap junction alpha-3 protein (Gja3) of Rattus norvegicus (Rat).